The following is a 57-amino-acid chain: Large ribosomal subunit protein uL30 (57 aa).

This sequence belongs to the universal ribosomal protein uL30 family. In terms of assembly, part of the 50S ribosomal subunit.

The sequence is that of Large ribosomal subunit protein uL30 from Clostridium perfringens (strain ATCC 13124 / DSM 756 / JCM 1290 / NCIMB 6125 / NCTC 8237 / Type A).